Here is a 254-residue protein sequence, read N- to C-terminus: Winged helix repair factor 1 (254 aa).

Positions 4-21 (KRHHLIPETFGVKRRRKR) match the Bipartite nuclear localization signal motif. Winged helix domain stretches follow at residues 32–104 (EPGS…GIIF), 120–179 (PYAG…LAVP), and 180–254 (GAGR…LPET).

It belongs to the STK19 family. In terms of assembly, monomer in solution. Homodimer; when bound to DNA. Component of a transcription-coupled nucleotide excision repair (TC-NER) complex composed of STK19, ERCC6, ERCC8, DDA1, DDB1, ELOF1 and UVSSA which assembles and interacts with the multiprotein RNA polymerase II complex when it stalls at DNA lesions. As to expression, monocytes, hepatocytes, epithelial cells, T- and B-lymphocytes.

It is found in the nucleus. Its subcellular location is the cytoplasm. DNA-binding protein which is required for efficient transcription-coupled nucleotide excision repair (TC-NER). Acts as part of a TC-NER complex which assembles and interacts with RNA polymerase II (RNAPII) when it stalls at DNA lesions. TC-NER complex subunit UVSSA binds to the GTF2H1/p62 subunit of the TFIIH transcription factor complex, tethering TFIIH to the TC-NER complex. WHR1/STK19 then interacts with the XPD helicase subunit of TFIIH which guides TFIIH to DNA downstream of the stalled RNAPII, ensuring DNA repair. Directly interacts with RNAPII and also binds to downstream DNA. Promotes the timely removal of DNA damage-stalled RNAPII, allowing downstream NER factors to access DNA lesions. Required for monoubiquitination of UVSSA. Regulates repositioning and stabilization of UVSSA within the TC-NER complex. Stimulates ubiquitination of RNAPII complex member RBP1. Also binds to RNA and regulates the expression levels of many mRNAs. This is Winged helix repair factor 1 from Homo sapiens (Human).